The primary structure comprises 162 residues: COP9 signalosome complex subunit 9 (162 aa).

Positions E6 to R118 constitute a PCI domain.

As to quaternary structure, component of a COP9 signalosome-like (CSN) complex, composed of at least RRI1/CSN5, CSN9, RRI2/CSN10, PCI8/CSN11, CSN12 and CSI1. In the complex, it probably interacts directly with CSN12 and CSI1. Also interacts with RPN5.

The protein resides in the cytoplasm. It localises to the nucleus. In terms of biological role, component of the COP9 signalosome (CSN) complex that acts as a regulator of the ubiquitin (Ubl) conjugation pathway by mediating the deneddylation of the cullin subunit of SCF-type E3 ubiquitin-protein ligase complexes. The CSN complex is involved in the regulation of the mating pheromone response. The protein is COP9 signalosome complex subunit 9 (CSN9) of Saccharomyces cerevisiae (strain ATCC 204508 / S288c) (Baker's yeast).